The primary structure comprises 315 residues: Ribosomal RNA small subunit methyltransferase H (315 aa).

S-adenosyl-L-methionine is bound by residues 42-44, Asp59, Phe96, Asp108, and Gln115; that span reads GGH.

This sequence belongs to the methyltransferase superfamily. RsmH family.

The protein localises to the cytoplasm. It carries out the reaction cytidine(1402) in 16S rRNA + S-adenosyl-L-methionine = N(4)-methylcytidine(1402) in 16S rRNA + S-adenosyl-L-homocysteine + H(+). Its function is as follows. Specifically methylates the N4 position of cytidine in position 1402 (C1402) of 16S rRNA. The sequence is that of Ribosomal RNA small subunit methyltransferase H from Gemmatimonas aurantiaca (strain DSM 14586 / JCM 11422 / NBRC 100505 / T-27).